We begin with the raw amino-acid sequence, 304 residues long: Non-specific ribonucleoside hydrolase RihC (304 aa).

His233 is a catalytic residue.

The protein belongs to the IUNH family. RihC subfamily.

Hydrolyzes both purine and pyrimidine ribonucleosides with a broad-substrate specificity. The polypeptide is Non-specific ribonucleoside hydrolase RihC (Shigella flexneri serotype 5b (strain 8401)).